A 415-amino-acid chain; its full sequence is MNNELIIKGKKAKEASYTLSFASTNEKNNGLLKISESLIKRCDEILEENKKDLEKAIEKGTSNAMLDRLKLDEERVKSIANAVADVVKLDDPIGEVTSMFKRPNGLRIGVQRVPLGVVGIIYEARPNVTADAAALCLKTGNAVILRGGSEAINSNLKIVEIISDALKEASLPEGSVQILEDTSRETATDFMRLNDYLDVLIPRGGAGLIKAVVNNATVPVIETGVGNCHIYIDDEADINMGVDIIVNAKTSRPAVCNAAEKLLVNEKIAEEFLPVAIKALKEKGVEIRGCEKTKAIVNDINLATEEDWGKEYLDYILGVKVVKDLDEAISHINKYGTKHSESIVTKNYFNSEKFLQRVDAAAVYVNASTRFTDGGEFGFGAEIGISTQKLHARGPMGLKELTTNKYIIYGNGQIR.

It belongs to the gamma-glutamyl phosphate reductase family.

The protein resides in the cytoplasm. It carries out the reaction L-glutamate 5-semialdehyde + phosphate + NADP(+) = L-glutamyl 5-phosphate + NADPH + H(+). The protein operates within amino-acid biosynthesis; L-proline biosynthesis; L-glutamate 5-semialdehyde from L-glutamate: step 2/2. In terms of biological role, catalyzes the NADPH-dependent reduction of L-glutamate 5-phosphate into L-glutamate 5-semialdehyde and phosphate. The product spontaneously undergoes cyclization to form 1-pyrroline-5-carboxylate. This Clostridium perfringens (strain ATCC 13124 / DSM 756 / JCM 1290 / NCIMB 6125 / NCTC 8237 / Type A) protein is Gamma-glutamyl phosphate reductase.